The sequence spans 578 residues: Sulfite reductase [NADPH] hemoprotein beta-component (578 aa).

Positions 1–11 (MSANQQSNSQE) are enriched in polar residues. Residues 1 to 20 (MSANQQSNSQEVLGEVLGPL) are disordered. Positions 441, 447, 487, and 491 each coordinate [4Fe-4S] cluster. Siroheme is bound at residue C491.

It belongs to the nitrite and sulfite reductase 4Fe-4S domain family. In terms of assembly, alpha(8)-beta(8). The alpha component is a flavoprotein, the beta component is a hemoprotein. Requires siroheme as cofactor. [4Fe-4S] cluster serves as cofactor.

It catalyses the reaction hydrogen sulfide + 3 NADP(+) + 3 H2O = sulfite + 3 NADPH + 4 H(+). It functions in the pathway sulfur metabolism; hydrogen sulfide biosynthesis; hydrogen sulfide from sulfite (NADPH route): step 1/1. Functionally, component of the sulfite reductase complex that catalyzes the 6-electron reduction of sulfite to sulfide. This is one of several activities required for the biosynthesis of L-cysteine from sulfate. The polypeptide is Sulfite reductase [NADPH] hemoprotein beta-component (Vibrio campbellii (strain ATCC BAA-1116)).